Consider the following 115-residue polypeptide: Probable non-functional immunoglobulin heavy variable 8-51-1 (115 aa).

An N-terminal signal peptide occupies residues 1–17; sequence MLVCVLLYSFRLFGIQG. Residues 18–42 form a framework-1 region; it reads EAQLTESGGDLVHLEGPLRLSCAAS. The 97-residue stretch at 19 to 115 folds into the Ig-like domain; the sequence is AQLTESGGDL…QNMAAFNCAG (97 aa). A complementarity-determining-1 region spans residues 43 to 50; it reads WFTFSIYE. The interval 51 to 67 is framework-2; the sequence is IHWVCQASGKGLEWVAV. Cys-55 and Cys-113 form a disulfide bridge. The complementarity-determining-2 stretch occupies residues 68-75; that stretch reads IWRGESHQ. Positions 76-113 are framework-3; the sequence is YNADYVRGRLTTSRDNTKYMLYMQMISLRTQNMAAFNC. Positions 114–115 are complementarity-determining-3; that stretch reads AG.

In terms of assembly, immunoglobulins are composed of two identical heavy chains and two identical light chains; disulfide-linked.

The protein resides in the secreted. Its subcellular location is the cell membrane. Its function is as follows. Probable non-functional open reading frame (ORF) of V region of the variable domain of immunoglobulin heavy chains. Non-functional ORF generally cannot participate in the synthesis of a productive immunoglobulin chain due to altered V-(D)-J or switch recombination and/or splicing site (at mRNA level) and/or conserved amino acid change (protein level). Immunoglobulins, also known as antibodies, are membrane-bound or secreted glycoproteins produced by B lymphocytes. In the recognition phase of humoral immunity, the membrane-bound immunoglobulins serve as receptors which, upon binding of a specific antigen, trigger the clonal expansion and differentiation of B lymphocytes into immunoglobulins-secreting plasma cells. Secreted immunoglobulins mediate the effector phase of humoral immunity, which results in the elimination of bound antigens. The antigen binding site is formed by the variable domain of one heavy chain, together with that of its associated light chain. Thus, each immunoglobulin has two antigen binding sites with remarkable affinity for a particular antigen. The variable domains are assembled by a process called V-(D)-J rearrangement and can then be subjected to somatic hypermutations which, after exposure to antigen and selection, allow affinity maturation for a particular antigen. The protein is Probable non-functional immunoglobulin heavy variable 8-51-1 of Homo sapiens (Human).